Consider the following 235-residue polypeptide: MLLLISPKNIEEAKEAIAGGAHIIDVKNPPEGSLGANFPWVIEEVKNITPKNLLVSATVGDVPYKPGTVSLAALGVAVSGADYIKVGLYGTKTYYEAVDVMEKVVKAVKSVDKNKIVVAAGYADAYRVGAVDPLIIPKIARDSGCDVAMLDTALKDGMSLFDHLDEKLLKEFIEETRSYGLKSALAGSIKKEEIAILKKLGCDIVGIRGAACSYGDRNEGTIQKELVEELVKLCE.

The Schiff-base intermediate with substrate role is filled by K27. K85 acts as the Proton acceptor in catalysis.

The protein belongs to the MfnB family.

The enzyme catalyses 2 D-glyceraldehyde 3-phosphate = 4-(hydroxymethyl)-2-furancarboxaldehyde phosphate + phosphate + 2 H2O. The protein operates within cofactor biosynthesis; methanofuran biosynthesis. In terms of biological role, catalyzes the formation of 4-(hydroxymethyl)-2-furancarboxaldehyde phosphate (4-HFC-P) from two molecules of glyceraldehyde-3-P (GA-3-P). This chain is (5-formylfuran-3-yl)methyl phosphate synthase, found in Methanococcus aeolicus (strain ATCC BAA-1280 / DSM 17508 / OCM 812 / Nankai-3).